A 268-amino-acid polypeptide reads, in one-letter code: Helix-loop-helix protein 25 (268 aa).

The segment covering M1–S23 has biased composition (polar residues). Positions M1 to R29 are disordered. The segment at E92–R105 is basic motif. The bHLH domain occupies E92–N149. The helix-loop-helix motif stretch occupies residues K106–N149.

The protein resides in the nucleus. Its function is as follows. Probable transcription factor. Modulates lifespan and also recovery from the developmentally arrested larval state known as dauer, perhaps acting upstream of phosphatase PTEN/daf-18. Regulates expression of genes involved in cell division, cell-cycle regulation, and sexual reproduction, including daf-18. The sequence is that of Helix-loop-helix protein 25 from Caenorhabditis elegans.